The sequence spans 227 residues: Ras-related protein Rab-3C (227 aa).

9 residues coordinate GTP: Ser-39, Gly-42, Lys-43, Thr-44, Ser-45, Thr-56, Ser-57, Ser-61, and Thr-62. Thr-44 lines the Mg(2+) pocket. The Switch 1 signature appears at 53–66 (DSFTSAFVSTVGID). Mg(2+) contacts are provided by Thr-62 and Asp-85. Thr-86 bears the Phosphothreonine mark. Residues 86–104 (TAGQERYRTITTAYYRGAM) carry the Switch 2 motif. GTP is bound by residues Gly-88, Asn-143, Lys-144, Asp-146, Ala-174, and Lys-175. Phosphoserine is present on residues Ser-196 and Ser-198. Thr-206 is modified (phosphothreonine). Residues Cys-225 and Cys-227 are each lipidated (S-geranylgeranyl cysteine). Cys-227 carries the cysteine methyl ester modification.

This sequence belongs to the small GTPase superfamily. Rab family. Interacts with RIMS1, RIMS2, RPH3A and RPH3AL. The GTP-bound form interacts with REP15. Interacts with GDI2, CHM and CHML; phosphorylation at Thr-86 disrupts these interactions. Interacts with MADD (via uDENN domain); the GTP-bound form is preferred for interaction. Mg(2+) is required as a cofactor. Post-translationally, phosphorylation of Thr-86 in the switch II region by LRRK2 prevents the association of RAB regulatory proteins, including CHM, CHML and RAB GDP dissociation inhibitor GDI2.

It localises to the cell membrane. The catalysed reaction is GTP + H2O = GDP + phosphate + H(+). Its activity is regulated as follows. Regulated by guanine nucleotide exchange factors (GEFs) which promote the exchange of bound GDP for free GTP. Regulated by GTPase activating proteins (GAPs) which increase the GTP hydrolysis activity. Inhibited by GDP dissociation inhibitors (GDIs) which prevent Rab-GDP dissociation. In terms of biological role, the small GTPases Rab are key regulators of intracellular membrane trafficking, from the formation of transport vesicles to their fusion with membranes. Rabs cycle between an inactive GDP-bound form and an active GTP-bound form that is able to recruit to membranes different sets of downstream effectors directly responsible for vesicle formation, movement, tethering and fusion. This chain is Ras-related protein Rab-3C (RAB3C), found in Bos taurus (Bovine).